Reading from the N-terminus, the 445-residue chain is Phosphoglucosamine mutase (445 aa).

Ser101 acts as the Phosphoserine intermediate in catalysis. 4 residues coordinate Mg(2+): Ser101, Asp240, Asp242, and Asp244. Phosphoserine is present on Ser101.

This sequence belongs to the phosphohexose mutase family. Mg(2+) is required as a cofactor. In terms of processing, activated by phosphorylation.

It carries out the reaction alpha-D-glucosamine 1-phosphate = D-glucosamine 6-phosphate. Functionally, catalyzes the conversion of glucosamine-6-phosphate to glucosamine-1-phosphate. In Azotobacter vinelandii (strain DJ / ATCC BAA-1303), this protein is Phosphoglucosamine mutase.